An 837-amino-acid chain; its full sequence is Outer membrane usher protein HifC (837 aa).

A signal peptide spans 1 to 26 (MKTKIFPLNKIAFACSLLLANPLAWA). Cysteines 813 and 833 form a disulfide.

The protein belongs to the fimbrial export usher family.

Its subcellular location is the cell outer membrane. Essential for piliation. The protein is Outer membrane usher protein HifC (hifC) of Haemophilus influenzae.